The chain runs to 97 residues: uncharacterized protein (97 aa).

Functionally, may have a regulatory function. This is an uncharacterized protein from Synechocystis sp. (strain ATCC 27184 / PCC 6803 / Kazusa).